We begin with the raw amino-acid sequence, 276 residues long: Large ribosomal subunit protein uL2 (276 aa).

Positions 224-276 (AMNPIDHPHGGGEGKTSGGRNPVTPWGVSTKGKKTRKKNKSSNKYIKRVSDKG) are disordered. Basic residues predominate over residues 254 to 270 (KGKKTRKKNKSSNKYIK).

It belongs to the universal ribosomal protein uL2 family. Part of the 50S ribosomal subunit. Forms a bridge to the 30S subunit in the 70S ribosome.

Its function is as follows. One of the primary rRNA binding proteins. Required for association of the 30S and 50S subunits to form the 70S ribosome, for tRNA binding and peptide bond formation. It has been suggested to have peptidyltransferase activity; this is somewhat controversial. Makes several contacts with the 16S rRNA in the 70S ribosome. The chain is Large ribosomal subunit protein uL2 from Ehrlichia ruminantium (strain Gardel).